Reading from the N-terminus, the 279-residue chain is Tryptophan synthase alpha chain (279 aa).

Active-site proton acceptor residues include glutamate 50 and aspartate 61.

It belongs to the TrpA family. As to quaternary structure, tetramer of two alpha and two beta chains.

The enzyme catalyses (1S,2R)-1-C-(indol-3-yl)glycerol 3-phosphate + L-serine = D-glyceraldehyde 3-phosphate + L-tryptophan + H2O. The protein operates within amino-acid biosynthesis; L-tryptophan biosynthesis; L-tryptophan from chorismate: step 5/5. In terms of biological role, the alpha subunit is responsible for the aldol cleavage of indoleglycerol phosphate to indole and glyceraldehyde 3-phosphate. The polypeptide is Tryptophan synthase alpha chain (Methylobacterium radiotolerans (strain ATCC 27329 / DSM 1819 / JCM 2831 / NBRC 15690 / NCIMB 10815 / 0-1)).